Reading from the N-terminus, the 279-residue chain is Eukaryotic translation initiation factor 3 subunit G (279 aa).

Disordered regions lie at residues 69–90 (AKYG…QLGE) and 149–193 (LNGG…EARD). At S77 the chain carries Phosphoserine. The RRM domain maps to 196-275 (TTLKVSQLNT…LILHLEWSKK (80 aa)).

This sequence belongs to the eIF-3 subunit G family. Component of the eukaryotic translation initiation factor 3 (eIF-3) complex.

It localises to the cytoplasm. Its function is as follows. RNA-binding component of the eukaryotic translation initiation factor 3 (eIF-3) complex, which is involved in protein synthesis of a specialized repertoire of mRNAs and, together with other initiation factors, stimulates binding of mRNA and methionyl-tRNAi to the 40S ribosome. The eIF-3 complex specifically targets and initiates translation of a subset of mRNAs involved in cell proliferation. This subunit can bind 18S rRNA. This is Eukaryotic translation initiation factor 3 subunit G from Lodderomyces elongisporus (strain ATCC 11503 / CBS 2605 / JCM 1781 / NBRC 1676 / NRRL YB-4239) (Yeast).